Here is an 86-residue protein sequence, read N- to C-terminus: Acyl carrier protein (86 aa).

Positions 10 to 85 constitute a Carrier domain; sequence DKIEQKVIEM…DVIQYIKERQ (76 aa). Residue S45 is modified to O-(pantetheine 4'-phosphoryl)serine.

The protein belongs to the acyl carrier protein (ACP) family. 4'-phosphopantetheine is transferred from CoA to a specific serine of apo-ACP by AcpS. This modification is essential for activity because fatty acids are bound in thioester linkage to the sulfhydryl of the prosthetic group.

The protein localises to the cytoplasm. It participates in lipid metabolism; fatty acid biosynthesis. Carrier of the growing fatty acid chain in fatty acid biosynthesis. In Rickettsia canadensis (strain McKiel), this protein is Acyl carrier protein.